The sequence spans 199 residues: Probable GTP-binding protein EngB (199 aa).

One can recognise an EngB-type G domain in the interval 28 to 199; the sequence is DLPEIALAGR…DSWDAILEQV (172 aa). GTP is bound by residues 36-43, 63-67, 81-84, 148-151, and 180-182; these read GRSNVGKS, GKTQL, DVPG, TKAD, and FSS. Mg(2+) contacts are provided by Ser43 and Thr65.

It belongs to the TRAFAC class TrmE-Era-EngA-EngB-Septin-like GTPase superfamily. EngB GTPase family. The cofactor is Mg(2+).

Functionally, necessary for normal cell division and for the maintenance of normal septation. The polypeptide is Probable GTP-binding protein EngB (Streptococcus pyogenes serotype M6 (strain ATCC BAA-946 / MGAS10394)).